The primary structure comprises 359 residues: Flavonoid 8-O-methyltransferase 1 (359 aa).

Aspartate 223 is a binding site for S-adenosyl-L-methionine. Histidine 261 acts as the Proton acceptor in catalysis.

Belongs to the class I-like SAM-binding methyltransferase superfamily. Cation-independent O-methyltransferase family. Expressed in leaves and trichomes, especially in cv. SD and cv. EMX-1, but barely in cv. MC and cv. SW.

It catalyses the reaction an 8-hydroxyflavone + S-adenosyl-L-methionine = an 8-methoxyflavone + S-adenosyl-L-homocysteine + H(+). The enzyme catalyses 4',7,8-trihydroxyflavone + S-adenosyl-L-methionine = 4',7-dihydroxy-8-methoxyflavone + S-adenosyl-L-homocysteine + H(+). The catalysed reaction is 7,8-dihydroxyflavone + S-adenosyl-L-methionine = 7-hydroxy-8-methoxyflavone + S-adenosyl-L-homocysteine + H(+). It carries out the reaction 3',4',7,8-tetrahydroxyflavone + S-adenosyl-L-methionine = 3',4,7-trihydroxy-8-methoxyflavone + S-adenosyl-L-homocysteine + H(+). Its pathway is flavonoid metabolism. With respect to regulation, strongly inhibited by gardenin B (GARD B). Cation-independent flavonoid 8-O-methyltransferase involved in the biosynthesis of polymethoxylated flavonoids natural products such as nevadensin and salvigenin, aroma compounds which contribute to the flavor of sweet basil, and exhibit pharmacological activities such as anti-allergic, anti-oxidant, antibacterial, anti-proliferative, and anti-inflammatory effects. Catalyzes S-adenosylmethionine-dependent regioselective 8-O-methylation of flavonoids; mediates likely the conversion of pilosin (PIL) to nevadensin (NEV) and of 8-hydroxysalvigenin (8-OH-SALV) to gardenin B (GARD B). Can also use 3',4',7,8-tetrahydroxyflavone as substrate. Accepts other unnatural O-diphenols including 7,8,4'-trihydroxy-flavone and 7-O-methyl-8-hydroxy-flavone, and, with a lower efficiency, 7,8-dihydroxy-flavone, as substrates. The protein is Flavonoid 8-O-methyltransferase 1 of Ocimum basilicum (Sweet basil).